A 276-amino-acid polypeptide reads, in one-letter code: Nickel import system permease protein NikC (276 aa).

5 helical membrane passes run 10–30, 73–93, 108–128, 186–206, and 238–258; these read LIFF…FFVS, LFVT…LGLF, FIDV…ASFF, IIPA…LYIS, and IMLI…NLTG. The region spanning 69–258 is the ABC transmembrane type-1 domain; sequence ARSTLFVTVL…ITILIFNLTG (190 aa).

The protein belongs to the binding-protein-dependent transport system permease family. OppBC subfamily. In terms of assembly, the complex is composed of two ATP-binding proteins (NikD and NikE), two transmembrane proteins (NikB and NikC) and a solute-binding protein (NikA).

It is found in the cell membrane. Part of the ABC transporter complex NikABCDE (Opp2) involved in nickel import. Probably responsible for the translocation of the substrate across the membrane. The protein is Nickel import system permease protein NikC of Staphylococcus aureus (strain bovine RF122 / ET3-1).